A 738-amino-acid chain; its full sequence is Glycogen [starch] synthase, muscle (738 aa).

Residue Ser-8 is modified to Phosphoserine; by AMPK and PKA. Ser-11 is subject to Phosphoserine. A UDP-binding site is contributed by Lys-39. The UDP-alpha-D-glucose site is built by His-205 and Arg-211. Residues His-291, Glu-292, Gln-294, His-297, and Lys-301 each contribute to the alpha-D-glucose 6-phosphate site. Position 331 (Arg-331) interacts with UDP. Arg-331 contributes to the UDP-alpha-D-glucose binding site. Position 412 is a phosphoserine (Ser-412). Alpha-D-glucose 6-phosphate is bound at residue His-501. 3 residues coordinate UDP-alpha-D-glucose: Glu-510, Trp-512, and Gly-513. Thr-515 is a binding site for UDP. Alpha-D-glucose 6-phosphate-binding residues include Arg-582 and Arg-586. A disordered region spans residues 632 to 738; sequence QGYRYPRPAS…PTSSLGEERN (107 aa). Residue Ser-641 is modified to Phosphoserine; by DYRK2, GSK3-alpha, GSK3-beta and PASK. Residues Ser-645, Ser-649, Ser-652, Ser-653, Ser-657, and Ser-672 each carry the phosphoserine modification. A compositionally biased stretch (acidic residues) spans 658–681; sequence EDEEEPRDGPLGEDSERYDEEEEA. A compositionally biased stretch (basic and acidic residues) spans 682–695; the sequence is AKDRRNIRAPEWPR. Phosphoserine is present on residues Ser-698, Ser-709, and Ser-711. The span at 698–738 shows a compositional bias: low complexity; that stretch reads SCSSSTGGSKRSNSVDTGPSSSLSTPTEPLSPTSSLGEERN. Phosphothreonine is present on residues Thr-722 and Thr-724. Ser-728 and Ser-732 each carry phosphoserine.

This sequence belongs to the glycosyltransferase 3 family. As to quaternary structure, part of the GYS1-GYG1 complex, a heterooctamer composed of a tetramer of GYS1 and 2 dimers of GYG1, where each GYS1 protomer binds to one GYG1 subunit (via GYG1 C-terminus); the GYS1 tetramer may dissociate from GYG1 dimers to continue glycogen polymerization on its own. Primed phosphorylation at Ser-657 (site 5) by CSNK2A1 and CSNK2A2 is required for inhibitory phosphorylation at Ser-641 (site 3a), Ser-645 (site 3b), Ser-649 (site 3c) and Ser-653 (site 4) by GSK3A an GSK3B. Phosphorylated at Ser-641 by PASK, leading to inactivation; phosphorylation by PASK is inhibited by glycogen. Phosphorylated at Ser-641 by DYRK2, leading to inactivation. Dephosphorylation at Ser-641 and Ser-645 by PP1 activates the enzyme. Phosphorylation at Ser-8 by AMPK inactivates the enzyme activity.

It catalyses the reaction [(1-&gt;4)-alpha-D-glucosyl](n) + UDP-alpha-D-glucose = [(1-&gt;4)-alpha-D-glucosyl](n+1) + UDP + H(+). It functions in the pathway glycan biosynthesis; glycogen biosynthesis. Its activity is regulated as follows. Allosteric activation by glucose-6-phosphate. Phosphorylation reduces the activity towards UDP-glucose. When in the non-phosphorylated state, glycogen synthase does not require glucose-6-phosphate as an allosteric activator; when phosphorylated it does. In terms of biological role, glycogen synthase participates in the glycogen biosynthetic process along with glycogenin and glycogen branching enzyme. Extends the primer composed of a few glucose units formed by glycogenin by adding new glucose units to it. In this context, glycogen synthase transfers the glycosyl residue from UDP-Glc to the non-reducing end of alpha-1,4-glucan. The chain is Glycogen [starch] synthase, muscle (Gys1) from Mus musculus (Mouse).